Consider the following 101-residue polypeptide: Large ribosomal subunit protein uL24 (101 aa).

Belongs to the universal ribosomal protein uL24 family. In terms of assembly, part of the 50S ribosomal subunit.

Its function is as follows. One of two assembly initiator proteins, it binds directly to the 5'-end of the 23S rRNA, where it nucleates assembly of the 50S subunit. Functionally, one of the proteins that surrounds the polypeptide exit tunnel on the outside of the subunit. In Borrelia turicatae (strain 91E135), this protein is Large ribosomal subunit protein uL24.